The sequence spans 560 residues: Nibrin homolog (560 aa).

Positions 25-87 (YKVGRKDCDV…YGTFFNKVQG (63 aa)) constitute an FHA domain. The BRCT domain occupies 115 to 190 (TFRLSFVPIV…KQIVLGDWFK (76 aa)).

This sequence belongs to the Nibrin family. Component of the MRN complex composed of two heterodimers RAD50 and MRE11 associated with a single NBS1. As to expression, mostly expressed in the shoot apex and young flower, but also in young leaves, root tips and stamen, tissues where frequent cell division or meiosis may occur.

Its subcellular location is the nucleus. It localises to the chromosome. In terms of biological role, component of the MRN complex, which plays a central role in double-strand break (DSB) repair, DNA recombination, maintenance of telomere integrity and meiosis. The MRN complex is involved in the repair of DNA double-strand breaks (DSBs) via homologous recombination (HR), an error-free mechanism which primarily occurs during S and G2 phases. The complex (1) mediates the end resection of damaged DNA, which generates proper single-stranded DNA, a key initial steps in HR, and is (2) required for the recruitment of other repair factors and efficient activation of ATM and ATR upon DNA damage. The MRN complex possesses single-strand endonuclease activity and double-strand-specific 3'-5' exonuclease activity, which are provided by MRE11, to initiate end resection, which is required for single-strand invasion and recombination. Within the MRN complex, NBS1 acts as a protein-protein adapter, which specifically recognizes and binds phosphorylated proteins, promoting their recruitment to DNA damage sites. Recruits MRE11 and RAD50 components of the MRN complex to DSBs in response to DNA damage. The chain is Nibrin homolog from Oryza sativa subsp. japonica (Rice).